Consider the following 270-residue polypeptide: tRNA pseudouridine synthase A (270 aa).

D52 serves as the catalytic Nucleophile. Position 110 (Y110) interacts with substrate.

Belongs to the tRNA pseudouridine synthase TruA family. As to quaternary structure, homodimer.

The enzyme catalyses uridine(38/39/40) in tRNA = pseudouridine(38/39/40) in tRNA. In terms of biological role, formation of pseudouridine at positions 38, 39 and 40 in the anticodon stem and loop of transfer RNAs. This chain is tRNA pseudouridine synthase A, found in Roseiflexus castenholzii (strain DSM 13941 / HLO8).